The chain runs to 359 residues: Serum paraoxonase/arylesterase 1 (359 aa).

Cys-42 and Cys-353 are oxidised to a cystine. N-linked (GlcNAc...) asparagine glycosylation occurs at Asn-50. Positions 53 and 54 each coordinate Ca(2+). The active-site Proton acceptor is His-115. Residues Ile-117, Asn-168, Asp-169, and Asn-224 each contribute to the Ca(2+) site. N-linked (GlcNAc...) asparagine glycosylation occurs at Asn-253. Asp-269 and Asn-270 together coordinate Ca(2+). N-linked (GlcNAc...) asparagine glycosylation is found at Asn-270 and Asn-324.

Belongs to the paraoxonase family. As to quaternary structure, homodimer. Interacts with CLU. The cofactor is Ca(2+). Glycosylated. In terms of processing, the signal sequence is not cleaved. Plasma. Associated with HDL.

The protein localises to the secreted. It is found in the extracellular space. The catalysed reaction is a phenyl acetate + H2O = a phenol + acetate + H(+). The enzyme catalyses An aryl dialkyl phosphate + H2O = dialkyl phosphate + an aryl alcohol.. It carries out the reaction an N-acyl-L-homoserine lactone + H2O = an N-acyl-L-homoserine + H(+). Its function is as follows. Hydrolyzes the toxic metabolites of a variety of organophosphorus insecticides. Capable of hydrolyzing a broad spectrum of organophosphate substrates and lactones, and a number of aromatic carboxylic acid esters. Mediates an enzymatic protection of low density lipoproteins against oxidative modification. The protein is Serum paraoxonase/arylesterase 1 (PON1) of Oryctolagus cuniculus (Rabbit).